The sequence spans 202 residues: Small ribosomal subunit protein uS4 (202 aa).

The tract at residues 15–43 (LGDLPGLTRKAAKRSNPPGQHGNARRKRS) is disordered. Residues 90 to 152 (GRLDNVCFRL…KGSKKLAEGN (63 aa)) enclose the S4 RNA-binding domain.

This sequence belongs to the universal ribosomal protein uS4 family. Part of the 30S ribosomal subunit. Contacts protein S5. The interaction surface between S4 and S5 is involved in control of translational fidelity.

One of the primary rRNA binding proteins, it binds directly to 16S rRNA where it nucleates assembly of the body of the 30S subunit. Functionally, with S5 and S12 plays an important role in translational accuracy. The sequence is that of Small ribosomal subunit protein uS4 from Prochlorococcus marinus (strain SARG / CCMP1375 / SS120).